Reading from the N-terminus, the 284-residue chain is Pheromone-regulated membrane protein 4 (284 aa).

The helical transmembrane segment at 20–38 (IISLTLVLLGVFSFLLLTW) threads the bilayer. A Glutaredoxin domain is found at 157–272 (RTDFLDIIRT…PLLKSEARGN (116 aa)).

The protein resides in the membrane. The chain is Pheromone-regulated membrane protein 4 (PRM4) from Saccharomyces cerevisiae (strain ATCC 204508 / S288c) (Baker's yeast).